The primary structure comprises 319 residues: Large ribosomal subunit protein uL10 (319 aa).

Positions 286–295 are enriched in low complexity; sequence ADSGAAAPSA. A disordered region spans residues 286 to 319; the sequence is ADSGAAAPSAAKEEEKKEEPEEESDGDLGMSLFD.

This sequence belongs to the universal ribosomal protein uL10 family. As to quaternary structure, P0 forms a pentameric complex by interaction with dimers of P1 and P2. Interacts with NSF. In terms of processing, phosphorylated. In terms of tissue distribution, highly expressed in stems, inflorescences and immature seeds (at protein level). Expressed in leaves and mature seeds (at protein level).

Ribosomal protein P0 is the functional equivalent of E.coli protein L10. The chain is Large ribosomal subunit protein uL10 from Oryza sativa subsp. japonica (Rice).